We begin with the raw amino-acid sequence, 306 residues long: Lipoyl synthase 2 (306 aa).

[4Fe-4S] cluster is bound by residues cysteine 49, cysteine 54, cysteine 60, cysteine 75, cysteine 79, cysteine 82, and serine 300. Residues 61–289 enclose the Radical SAM core domain; that stretch reads YAAGTATFLL…AEVACKLGFA (229 aa).

It belongs to the radical SAM superfamily. Lipoyl synthase family. [4Fe-4S] cluster is required as a cofactor.

It is found in the cytoplasm. The enzyme catalyses [[Fe-S] cluster scaffold protein carrying a second [4Fe-4S](2+) cluster] + N(6)-octanoyl-L-lysyl-[protein] + 2 oxidized [2Fe-2S]-[ferredoxin] + 2 S-adenosyl-L-methionine + 4 H(+) = [[Fe-S] cluster scaffold protein] + N(6)-[(R)-dihydrolipoyl]-L-lysyl-[protein] + 4 Fe(3+) + 2 hydrogen sulfide + 2 5'-deoxyadenosine + 2 L-methionine + 2 reduced [2Fe-2S]-[ferredoxin]. It participates in protein modification; protein lipoylation via endogenous pathway; protein N(6)-(lipoyl)lysine from octanoyl-[acyl-carrier-protein]: step 2/2. Catalyzes the radical-mediated insertion of two sulfur atoms into the C-6 and C-8 positions of the octanoyl moiety bound to the lipoyl domains of lipoate-dependent enzymes, thereby converting the octanoylated domains into lipoylated derivatives. The protein is Lipoyl synthase 2 of Prochlorococcus marinus (strain MIT 9313).